Here is a 1187-residue protein sequence, read N- to C-terminus: MRPRGAAFAAGPPGDLHLGTAIGFAGAIWRSRSPAMSTLLDIKSSVLRQVQVCPSFRRRTEQDPGSASADPQEPATGAWKPGDGVEFFAHMRLMLKKGEGRQGLPCLEVPLRSGSPAPPEPVDPSLGLRALAPEEVEMLYEEALYTVLYRAGTMGPDQVDDEEALLSYLQQVFGTSLEEHTEAIERVRKAKAPTYALKVSVMRAKNLLAKDPNGFSDPYCMLGILPASDATREPRAQKEQRFGFRKGSKRGGPLPAKCIQVTEVKSSTLNPVWKEHFLFEIEDVSTDQLHLDIWDHDDDVSLVEACRKLNEVIGLKGMGRYFKQIVKSARANGTAGPTEDHTDDFLGCLNIPVREVPVAGVDRWFKLEPRSSASRVQGHCHLVLKLITTQRDTAMSQRGRSGFLSHLLLLSHLLRLEHSAEEPNSSSWRGELSTPAATILCLHGAQSNLSPLQLAVLHWQVSSRHHQTCTLDYSYLLGLLEDMQAHWEEAPSLPQEQEESLADSLSAFSEFGLQLLRQLRDYFPATNSTAVHRLELLLKCLGKLQLFQPSFEICPFESELNMDIAAALKRGNREWYDRILNDKSPREQPGPQRLPGLVVLADAVYDDLQFCYSVYASLFHSILNVDVFTLTFRQLERLVAEEAWVLTEELSPKMTLEVASGLFELYLTLADLQRFWDSIPGRDSRSLALAGIHAPFLPAVKLWFQVLRDQAKWRLQGAVDMDTLEPVDASSRHSSSAATAGLCLSHIQELWVRLAWPDPAQAQGLGTQLGQDVCEATLFYTELLRKKVDTQPGAAGEAVSEALCVVLNNVELVRKAAGQALKGLAWPEGATGPEGVLPRPLLSCTQALDDDLQREAHTVTAHLTSKMVGDIRKYVQHISLSPDSIQNDEAVAPLMKYLDEKLALLNASLVKGNLSRVLEALWELLLQAILQALGANRDVSADFYSRFHFTLEALVSFFHAEGQGLPLESLRDGSYKRLKEELRLHKCSTRECIEQFYLDKLKQRTLEQNRFGRLSVRCHYEAAEQRLAVEVLHAADLLPLDANGLSDPFVIVELGPPHLFPLVRSQRTQVKTRTLHPVYDELFYFSVPAEACRRRAACVLFTVMDHDWLSTNDFAGEAALGLGGVTGVARPQVGGGARAGQPVTLHLCRPRAQVRSALRRLEGRTSKEAQEFVKKLKELEKCMEADP.

Positions 55–81 (SFRRRTEQDPGSASADPQEPATGAWKP) are disordered. In terms of domain architecture, C2 1 spans 176 to 335 (SLEEHTEAIE…VKSARANGTA (160 aa)). Residues D211, D217, D295, and D297 each coordinate Ca(2+). Positions 663–784 (FELYLTLADL…EATLFYTELL (122 aa)) constitute an MHD1 domain. Residues 888–996 (DEAVAPLMKY…CSTRECIEQF (109 aa)) enclose the MHD2 domain. Positions 1010–1136 (RFGRLSVRCH…GVARPQVGGG (127 aa)) constitute a C2 2 domain. 7 residues coordinate Ca(2+): L1040, D1041, D1047, D1105, D1107, S1110, and D1113.

This sequence belongs to the unc-13 family. As to quaternary structure, interacts with ADGRB1; this interaction is direct. Interacts with endosomal SNARE proteins VAMP3, VAMP4, STX6 and STX16; this interaction is increased in the presence of calcium. Ca(2+) is required as a cofactor. In terms of tissue distribution, predominantly expressed in brain. Also expressed in nonneural tissues such as breast and testes epithelium.

It localises to the cytoplasm. Its subcellular location is the cytosol. It is found in the recycling endosome membrane. The protein localises to the late endosome membrane. The protein resides in the golgi apparatus. It localises to the trans-Golgi network membrane. Its subcellular location is the cell membrane. Functionally, functions in endosome to Golgi retrograde transport. In response to calcium influx, may interact with SNARE fusion receptors and membrane phospholipids to mediate endosome fusion with the trans-Golgi network. By promoting the recycling of secretory vesicle transmembrane proteins, it indirectly controls dense-core secretory vesicle biogenesis, maturation and their ability to mediate the constitutive and regulated secretion of neurotransmitters and hormones. May regulate behavior and food intake by controlling calcium-stimulated exocytosis of neurotransmitters including NPY and serotonin and hormones like insulin. Proposed to play a role in hypothalamic neuronal firing by modulating gamma-aminobutyric acid (GABA)ergic inhibitory neurotransmission. The chain is BAI1-associated protein 3 from Homo sapiens (Human).